Reading from the N-terminus, the 894-residue chain is Pentatricopeptide repeat-containing protein At1g19720 (894 aa).

PPR repeat units follow at residues 80–110 (KRST…FGLF), 114–144 (DVFV…MRER), 145–179 (NLFT…GVLP), 180–214 (DDFL…GMSS), 215–245 (CLRV…MRER), 246–280 (DVIA…GISP), 281–315 (GLVT…GITA), 316–350 (DVFT…GVVP), 351–385 (NAVT…GFID), 386–416 (DVLV…VKNK), 417–451 (DVYT…NLRP), 452–486 (NIIT…GKVQ), 488–522 (NTAT…RFMP), 523–557 (NSVT…NLDA), 558–588 (IHAV…METK), 589–623 (DIIT…GITP), 624–659 (NRGT…HIIP), and 660–694 (ALEH…SETP). Residues 695 to 770 (IWESFLTGCR…PLGQSWIEVR (76 aa)) form a type E motif region. Residues 771–801 (NLIHTFTTGDQSKLCTDVLYPLVEKMSRLDN) are type E(+) motif. Residues 803-894 (SDQYNGELWI…NGDCSCKDYW (92 aa)) form a type DYW motif region.

It belongs to the PPR family. PCMP-H subfamily.

The sequence is that of Pentatricopeptide repeat-containing protein At1g19720 (DYW7) from Arabidopsis thaliana (Mouse-ear cress).